A 120-amino-acid chain; its full sequence is Large ribosomal subunit protein bL17 (120 aa).

This sequence belongs to the bacterial ribosomal protein bL17 family. Part of the 50S ribosomal subunit. Contacts protein L32.

This chain is Large ribosomal subunit protein bL17, found in Mycoplasmopsis synoviae (strain 53) (Mycoplasma synoviae).